The following is a 175-amino-acid chain: ATP synthase subunit delta (175 aa).

This sequence belongs to the ATPase delta chain family. F-type ATPases have 2 components, F(1) - the catalytic core - and F(0) - the membrane proton channel. F(1) has five subunits: alpha(3), beta(3), gamma(1), delta(1), epsilon(1). F(0) has three main subunits: a(1), b(2) and c(10-14). The alpha and beta chains form an alternating ring which encloses part of the gamma chain. F(1) is attached to F(0) by a central stalk formed by the gamma and epsilon chains, while a peripheral stalk is formed by the delta and b chains.

It localises to the cell inner membrane. F(1)F(0) ATP synthase produces ATP from ADP in the presence of a proton or sodium gradient. F-type ATPases consist of two structural domains, F(1) containing the extramembraneous catalytic core and F(0) containing the membrane proton channel, linked together by a central stalk and a peripheral stalk. During catalysis, ATP synthesis in the catalytic domain of F(1) is coupled via a rotary mechanism of the central stalk subunits to proton translocation. Functionally, this protein is part of the stalk that links CF(0) to CF(1). It either transmits conformational changes from CF(0) to CF(1) or is implicated in proton conduction. The protein is ATP synthase subunit delta of Xylella fastidiosa (strain M23).